The following is a 225-amino-acid chain: Small ribosomal subunit protein uS3 (225 aa).

Residues 38–106 (LRAFLRRKLS…DVALNIVEIR (69 aa)) enclose the KH type-2 domain.

It belongs to the universal ribosomal protein uS3 family. Part of the 30S ribosomal subunit. Forms a tight complex with proteins S10 and S14.

In terms of biological role, binds the lower part of the 30S subunit head. Binds mRNA in the 70S ribosome, positioning it for translation. This Gluconobacter oxydans (strain 621H) (Gluconobacter suboxydans) protein is Small ribosomal subunit protein uS3.